The chain runs to 132 residues: MVRPLKPSQIRRLIRQTGVRKHRNSLRYKMRIKKGDTVQVISGDDKGKIGEVLQVFPERNMVLVEGVNIVTYHRKPQREGESGRIETKEAPIHACKVMLYSKKQEVASRIGYQITADGRKVRVLKKTGEILD.

It belongs to the universal ribosomal protein uL24 family. Part of the 50S ribosomal subunit.

In terms of biological role, one of two assembly initiator proteins, it binds directly to the 5'-end of the 23S rRNA, where it nucleates assembly of the 50S subunit. Functionally, one of the proteins that surrounds the polypeptide exit tunnel on the outside of the subunit. This chain is Large ribosomal subunit protein uL24, found in Synechococcus sp. (strain JA-3-3Ab) (Cyanobacteria bacterium Yellowstone A-Prime).